A 599-amino-acid polypeptide reads, in one-letter code: UvrABC system protein C (599 aa).

The region spanning 15-93 (EKPGCYQYFD…IKEYQPRYNV (79 aa)) is the GIY-YIG domain. A UVR domain is found at 207 to 242 (HRLVRMYRDRMQVYSEGLRFEEAQICKERIELLERY).

This sequence belongs to the UvrC family. Interacts with UvrB in an incision complex.

Its subcellular location is the cytoplasm. Its function is as follows. The UvrABC repair system catalyzes the recognition and processing of DNA lesions. UvrC both incises the 5' and 3' sides of the lesion. The N-terminal half is responsible for the 3' incision and the C-terminal half is responsible for the 5' incision. This Porphyromonas gingivalis (strain ATCC BAA-308 / W83) protein is UvrABC system protein C.